The primary structure comprises 265 residues: Cytoplasmic envelopment protein 1 (265 aa).

This sequence belongs to the herpesviridae cytoplasmic envelopment protein 1 family.

The protein localises to the virion. It localises to the virion tegument. The protein resides in the host cytoplasm. Its subcellular location is the host Golgi apparatus. Its function is as follows. Plays a critical role in cytoplasmic virus egress. Participates in the final step of tegumentation and envelope acquisition within the host cytoplasm. The polypeptide is Cytoplasmic envelopment protein 1 (42) (Saimiriine herpesvirus 2 (strain 11) (SaHV-2)).